Here is a 318-residue protein sequence, read N- to C-terminus: Acetyl-coenzyme A carboxylase carboxyl transferase subunit alpha (318 aa).

The region spanning 31 to 292 (DLTNEIEKLE…NKTITKSLHA (262 aa)) is the CoA carboxyltransferase C-terminal domain.

Belongs to the AccA family. Acetyl-CoA carboxylase is a heterohexamer composed of biotin carboxyl carrier protein (AccB), biotin carboxylase (AccC) and two subunits each of ACCase subunit alpha (AccA) and ACCase subunit beta (AccD).

The protein resides in the cytoplasm. The catalysed reaction is N(6)-carboxybiotinyl-L-lysyl-[protein] + acetyl-CoA = N(6)-biotinyl-L-lysyl-[protein] + malonyl-CoA. The protein operates within lipid metabolism; malonyl-CoA biosynthesis; malonyl-CoA from acetyl-CoA: step 1/1. Its function is as follows. Component of the acetyl coenzyme A carboxylase (ACC) complex. First, biotin carboxylase catalyzes the carboxylation of biotin on its carrier protein (BCCP) and then the CO(2) group is transferred by the carboxyltransferase to acetyl-CoA to form malonyl-CoA. In Listeria monocytogenes serotype 4a (strain HCC23), this protein is Acetyl-coenzyme A carboxylase carboxyl transferase subunit alpha.